The primary structure comprises 160 residues: SsrA-binding protein (160 aa).

This sequence belongs to the SmpB family.

It localises to the cytoplasm. Its function is as follows. Required for rescue of stalled ribosomes mediated by trans-translation. Binds to transfer-messenger RNA (tmRNA), required for stable association of tmRNA with ribosomes. tmRNA and SmpB together mimic tRNA shape, replacing the anticodon stem-loop with SmpB. tmRNA is encoded by the ssrA gene; the 2 termini fold to resemble tRNA(Ala) and it encodes a 'tag peptide', a short internal open reading frame. During trans-translation Ala-aminoacylated tmRNA acts like a tRNA, entering the A-site of stalled ribosomes, displacing the stalled mRNA. The ribosome then switches to translate the ORF on the tmRNA; the nascent peptide is terminated with the 'tag peptide' encoded by the tmRNA and targeted for degradation. The ribosome is freed to recommence translation, which seems to be the essential function of trans-translation. This Yersinia pseudotuberculosis serotype O:1b (strain IP 31758) protein is SsrA-binding protein.